The sequence spans 441 residues: Ribulose bisphosphate carboxylase large chain (441 aa).

Lys5 bears the N6,N6,N6-trimethyllysine mark. Residues Asn114 and Thr164 each contribute to the substrate site. Residue Lys166 is the Proton acceptor of the active site. Residue Lys168 participates in substrate binding. 3 residues coordinate Mg(2+): Lys192, Asp194, and Glu195. N6-carboxylysine is present on Lys192. Catalysis depends on His285, which acts as the Proton acceptor. Residues Arg286, His318, and Ser370 each contribute to the substrate site.

Belongs to the RuBisCO large chain family. Type I subfamily. Heterohexadecamer of 8 large chains and 8 small chains; disulfide-linked. The disulfide link is formed within the large subunit homodimers. The cofactor is Mg(2+). Post-translationally, the disulfide bond which can form in the large chain dimeric partners within the hexadecamer appears to be associated with oxidative stress and protein turnover.

Its subcellular location is the plastid. It localises to the chloroplast. It catalyses the reaction 2 (2R)-3-phosphoglycerate + 2 H(+) = D-ribulose 1,5-bisphosphate + CO2 + H2O. The catalysed reaction is D-ribulose 1,5-bisphosphate + O2 = 2-phosphoglycolate + (2R)-3-phosphoglycerate + 2 H(+). Its function is as follows. RuBisCO catalyzes two reactions: the carboxylation of D-ribulose 1,5-bisphosphate, the primary event in carbon dioxide fixation, as well as the oxidative fragmentation of the pentose substrate in the photorespiration process. Both reactions occur simultaneously and in competition at the same active site. This Drosera petiolaris (Woolly sundew) protein is Ribulose bisphosphate carboxylase large chain.